The sequence spans 242 residues: NAD-dependent protein deacetylase (242 aa).

One can recognise a Deacetylase sirtuin-type domain in the interval 1 to 242 (MQQFEEVRTI…EFVEGLSSIK (242 aa)). 8 residues coordinate NAD(+): Ala23, Thr27, Phe34, Arg35, Gln102, Ile104, Asp105, and His120. Phe34 lines the nicotinamide pocket. Ile104 and Asp105 together coordinate nicotinamide. Residue His120 is the Proton acceptor of the active site. 4 residues coordinate Zn(2+): Cys128, Cys131, Cys148, and Cys151. NAD(+)-binding residues include Thr187, Ser188, Asn213, and Ile231.

Belongs to the sirtuin family. Class U subfamily. It depends on Zn(2+) as a cofactor.

The protein resides in the cytoplasm. The enzyme catalyses N(6)-acetyl-L-lysyl-[protein] + NAD(+) + H2O = 2''-O-acetyl-ADP-D-ribose + nicotinamide + L-lysyl-[protein]. Functionally, NAD-dependent protein deacetylase which modulates the activities of several enzymes which are inactive in their acetylated form. This is NAD-dependent protein deacetylase from Bacillus anthracis.